The sequence spans 408 residues: CinA-like protein (408 aa).

The protein belongs to the CinA family.

The sequence is that of CinA-like protein from Thermotoga sp. (strain RQ2).